A 218-amino-acid chain; its full sequence is MSPILGYWKIKGLVQPTRLLLEYLEEKYEEHLYERDEGDKWRNKKFELGLEFPNLPYYIDGDVKLTQSMAIIRYIADKHNMLGGCPKERAEISMLEGAVLDIRYGVSRIAYSKDFETLKVDFLSKLPEMLKMFEDRLCHKTYLNGDHVTHPDFMLYDALDVVLYMDPMCLDAFPKLVCFKKRIEAIPQIDKYLKSSKYIAWPLQGWQATFGGGDHPPK.

One can recognise a GST N-terminal domain in the interval 2-83 (SPILGYWKIK…YIADKHNMLG (82 aa)). Glutathione-binding positions include 7-8 (YW), 41-45 (WRNKK), 54-55 (NL), and 67-68 (QS). The GST C-terminal domain occupies 85–203 (CPKERAEISM…KSSKYIAWPL (119 aa)). Residue tyrosine 111 coordinates substrate.

It belongs to the GST superfamily. Mu family. As to quaternary structure, homodimer.

It catalyses the reaction RX + glutathione = an S-substituted glutathione + a halide anion + H(+). In terms of biological role, conjugation of reduced glutathione to a wide number of exogenous and endogenous hydrophobic electrophiles. Its function is as follows. GST isoenzymes appear to play a central role in the parasite detoxification system. Other functions are also suspected including a role in increasing the solubility of haematin in the parasite gut. This Schistosoma japonicum (Blood fluke) protein is Glutathione S-transferase class-mu 26 kDa isozyme.